The primary structure comprises 258 residues: tRNA pseudouridine synthase A (258 aa).

Asp-52 (nucleophile) is an active-site residue. Tyr-110 is a substrate binding site.

Belongs to the tRNA pseudouridine synthase TruA family. Homodimer.

The enzyme catalyses uridine(38/39/40) in tRNA = pseudouridine(38/39/40) in tRNA. Formation of pseudouridine at positions 38, 39 and 40 in the anticodon stem and loop of transfer RNAs. The polypeptide is tRNA pseudouridine synthase A (Francisella tularensis subsp. mediasiatica (strain FSC147)).